The following is a 236-amino-acid chain: Orotidine 5'-phosphate decarboxylase (236 aa).

Substrate-binding positions include aspartate 12, lysine 34, 60 to 69, threonine 123, arginine 184, glutamine 193, glycine 213, and arginine 214; that span reads DLKLHDIPHT. Lysine 62 (proton donor) is an active-site residue.

Belongs to the OMP decarboxylase family. Type 1 subfamily. In terms of assembly, homodimer.

It carries out the reaction orotidine 5'-phosphate + H(+) = UMP + CO2. It functions in the pathway pyrimidine metabolism; UMP biosynthesis via de novo pathway; UMP from orotate: step 2/2. Catalyzes the decarboxylation of orotidine 5'-monophosphate (OMP) to uridine 5'-monophosphate (UMP). In Gluconobacter oxydans (strain 621H) (Gluconobacter suboxydans), this protein is Orotidine 5'-phosphate decarboxylase.